A 121-amino-acid polypeptide reads, in one-letter code: UPF0344 protein BC_1150 (121 aa).

Helical transmembrane passes span 6-26 (ITAWALGLILFFVAYSLYSAG), 38-58 (LMYIIIIVTGFMLYMSIVKTA), 65-85 (WYGLKMLAGILVIGGMEMVLV), and 92-112 (PTGAVWGLFIVALVAVFYLGL).

The protein belongs to the UPF0344 family.

It is found in the cell membrane. This is UPF0344 protein BC_1150 from Bacillus cereus (strain ATCC 14579 / DSM 31 / CCUG 7414 / JCM 2152 / NBRC 15305 / NCIMB 9373 / NCTC 2599 / NRRL B-3711).